The primary structure comprises 699 residues: MKMWRLLLLGVATGRCLHEETQKSVRLLRPPFSQMPTHFRSSILPLPGSHEPRPLRIQTYYSRAPVPGEAWDPEGETRALAAVTETTRRIQGILAVLPVQGPLLLSRDPAQYCHAVWGDPDTPNYQRCSILNPGYKGESCLGAKIPDAHLRGYSLWPEHGLPQLIQPDGPGVQNADFLLYVQVAHTSKCHKEPSVIAYAACCQLDSEDRPLAGTIVYCGQHLRSPTLSHDDIVMATLHELLHALGFSGQLFKMWRDCPSGLSARENCSTRKQVTRRDERGQLLLTTPAVSHSLAKHLGVPGTLQGAPLEEKQGSLSSHWESRLLQGSIMTATFHGAQHTRLDPVTLAAFEDSGWYQVNHSAAEELLWGQGSGPDFGLVSTCRTGSSDFFCTGSGLGCHYLHLDKGSCDSDSTLEGCRIYKPLAKGSECWKEENGLHTRAENPHGEIYHRHSRCFLANLTSQVLSKHTSQPSTAPDLEDPTGCCYLHQCTHKGAYEVQVEGSPWIPCLPGKAVQIPGYDGLLYCPQGRLCLRDEGARAATSQPMSFTTQDLLSQLSLRLTGTPGHSLGKGQREELAEVVLQALVMRAGTSRCYFHSPTITTSLVFTVSMWKSPGCHGPSVAMLHRTLTLTLQMKPLQVHHGEAIFTTDYSKLWTSLDHNPSMTELLLSTGFCLLVLILVGALGTLAYQKRAMLQVAPSTT.

The signal sequence occupies residues methionine 1–histidine 18. The Extracellular portion of the chain corresponds to glutamate 19–glutamate 663. A Zn(2+)-binding site is contributed by histidine 238. Glutamate 239 is an active-site residue. Histidine 242 and histidine 318 together coordinate Zn(2+). A helical transmembrane segment spans residues leucine 664–leucine 684. At alanine 685 to threonine 699 the chain is on the cytoplasmic side.

This sequence belongs to the peptidase M8 family. Zn(2+) serves as cofactor. In terms of tissue distribution, specifically expressed in ciliated left-right organizer.

Its subcellular location is the membrane. In terms of biological role, putative metalloproteinase that plays a role in left-right patterning process. The protein is Ciliated left-right organizer metallopeptidase of Mus musculus (Mouse).